We begin with the raw amino-acid sequence, 532 residues long: Probable rhamnogalacturonase B (532 aa).

An N-terminal signal peptide occupies residues 1 to 21 (MRINTLSLFSLVSLVPTLALA). A disulfide bridge links Cys-42 with Cys-68. Catalysis depends on Asp-219, which acts as the Proton donor. Cys-221 and Cys-238 form a disulfide bridge. Residue Asn-239 is glycosylated (N-linked (GlcNAc...) asparagine). Residue His-294 is part of the active site. Asn-321 is a glycosylation site (N-linked (GlcNAc...) asparagine). Disulfide bonds link Cys-344–Cys-350 and Cys-374–Cys-383. 2 stretches are compositionally biased toward low complexity: residues 466–475 (TVAAATSTPA) and 490–499 (QPSQQSPGQS). A disordered region spans residues 466 to 532 (TVAAATSTPA…HRHHQRHGHH (67 aa)). Residues 521–532 (AGHRHHQRHGHH) show a composition bias toward basic residues.

This sequence belongs to the glycosyl hydrolase 28 family.

The protein resides in the secreted. The enzyme catalyses Endohydrolysis of alpha-D-GalA-(1-&gt;2)-alpha-L-Rha glycosidic bond in the rhamnogalacturonan I backbone with initial inversion of anomeric configuration releasing oligosaccharides with beta-D-GalA at the reducing end.. Pectinolytic enzymes consist of four classes of enzymes: pectine lyase, polygalacturonase, pectin methylesterase and rhamnogalacturonase. Hydrolyzes alpha-D-galacturonopyranosyl-(1,2)-alpha-L-rhamnopyranosyl linkages in the backbone of the hairy regions of pectins. The chain is Probable rhamnogalacturonase B (rhgB) from Aspergillus oryzae (strain ATCC 42149 / RIB 40) (Yellow koji mold).